A 252-amino-acid chain; its full sequence is 3-deoxy-manno-octulosonate cytidylyltransferase (252 aa).

This sequence belongs to the KdsB family.

Its subcellular location is the cytoplasm. The catalysed reaction is 3-deoxy-alpha-D-manno-oct-2-ulosonate + CTP = CMP-3-deoxy-beta-D-manno-octulosonate + diphosphate. The protein operates within nucleotide-sugar biosynthesis; CMP-3-deoxy-D-manno-octulosonate biosynthesis; CMP-3-deoxy-D-manno-octulosonate from 3-deoxy-D-manno-octulosonate and CTP: step 1/1. It functions in the pathway bacterial outer membrane biogenesis; lipopolysaccharide biosynthesis. Functionally, activates KDO (a required 8-carbon sugar) for incorporation into bacterial lipopolysaccharide in Gram-negative bacteria. The protein is 3-deoxy-manno-octulosonate cytidylyltransferase of Nitratidesulfovibrio vulgaris (strain DP4) (Desulfovibrio vulgaris).